The following is a 147-amino-acid chain: Hemoglobin subunit epsilon (147 aa).

Residues 3-147 enclose the Globin domain; that stretch reads HFTAEEKNAI…VANALAHKYH (145 aa). Serine 51 is subject to Phosphoserine. 2 residues coordinate heme b: histidine 64 and histidine 93.

It belongs to the globin family. In terms of assembly, heterotetramer of two alpha chains and two epsilon chains in early embryonic hemoglobin Gower-2; two zeta chains and two epsilon chains in early embryonic hemoglobin Gower-1. Red blood cells.

Its function is as follows. The epsilon chain is a beta-type chain of early mammalian embryonic hemoglobin. In Sminthopsis crassicaudata (Fat-tailed dunnart), this protein is Hemoglobin subunit epsilon (HBE1).